Here is a 133-residue protein sequence, read N- to C-terminus: MAEWHKIIEDISKNNKFEDAAIVDYKTTKNVLAAIPNRTFAKINPGEVIPLITNHNILKPLIGQKFCIVYTNSLMDENTYAMELLTGYAPVSPIVIARTHTALIFLMGKPTTSRRDVYRTCRDHATRVRATGN.

The protein belongs to the profilin family.

Functionally, more likely to influence phosphoinositide metabolism than actin assembly. The protein is Profilin of Cowpox virus (strain GRI-90 / Grishak) (CPV).